A 342-amino-acid chain; its full sequence is Isopentenyl-diphosphate delta-isomerase (342 aa).

Substrate is bound at residue 12 to 13; it reads RK. Residues 71 to 73, Ser-101, and Asn-129 each bind FMN; that span reads AMT. 101-103 lines the substrate pocket; sequence SQR. Gln-163 provides a ligand contact to substrate. Position 164 (Glu-164) interacts with Mg(2+). Residues Lys-195, Thr-225, 272–274, and 293–294 each bind FMN; these read GIR and AR.

The protein belongs to the IPP isomerase type 2 family. Homooctamer. Dimer of tetramers. The cofactor is FMN. NADPH is required as a cofactor. Requires Mg(2+) as cofactor.

Its subcellular location is the cytoplasm. It carries out the reaction isopentenyl diphosphate = dimethylallyl diphosphate. Functionally, involved in the biosynthesis of isoprenoids. Catalyzes the 1,3-allylic rearrangement of the homoallylic substrate isopentenyl (IPP) to its allylic isomer, dimethylallyl diphosphate (DMAPP). The chain is Isopentenyl-diphosphate delta-isomerase from Mycolicibacterium gilvum (strain PYR-GCK) (Mycobacterium gilvum (strain PYR-GCK)).